The primary structure comprises 536 residues: Chorismate synthase (536 aa).

The active site involves His-17. The interval 37–59 (EDVQPQLNRRRPGQGPLSTQRRE) is disordered. His-104 is a catalytic residue. The interval 344–377 (ERDGCSAATLSRERASDGRTTSRHEEEVERGRER) is disordered. Over residues 354-377 (SRERASDGRTTSRHEEEVERGRER) the composition is skewed to basic and acidic residues. Asp-489 is an active-site residue.

It belongs to the chorismate synthase family. The cofactor is FMNH2.

The catalysed reaction is 5-O-(1-carboxyvinyl)-3-phosphoshikimate = chorismate + phosphate. It carries out the reaction FMNH2 + NADP(+) = FMN + NADPH + 2 H(+). The protein operates within metabolic intermediate biosynthesis; chorismate biosynthesis; chorismate from D-erythrose 4-phosphate and phosphoenolpyruvate: step 7/7. Bifunctional chorismate synthase and flavin reductase. Catalyzes the conversion of 5-enolpyruvylshikimate 3-phosphate (EPSP) to form chorismate. Acts also as a flavin reductase (FR) able to generate reduced flavin mononucleotide in the presence of NADPH. The chain is Chorismate synthase (AROC) from Toxoplasma gondii.